Consider the following 568-residue polypeptide: Zinc finger protein 76 (568 aa).

Lys-24 is covalently cross-linked (Glycyl lysine isopeptide (Lys-Gly) (interchain with G-Cter in SUMO2)). A run of 3 repeats spans residues 34 to 45, 62 to 73, and 88 to 99. The tract at residues 34–99 is 3 X 12 AA approximate repeats; that stretch reads IQLEDGTTAY…LEDGSTAYIH (66 aa). 7 C2H2-type zinc fingers span residues 165-189, 195-219, 225-249, 255-279, 285-309, 315-339, and 345-368; these read FRCG…ERAH, YRCD…VRTH, YKCP…VRTH, FRCP…VRTH, YTCP…VRIH, YVCT…HVVH, and YTCS…RSAH. Positions 365-402 are disordered; sequence RSAHGELEATEESEQALYEQQQLEAASAAEESPPPKPT. The segment covering 379-395 has biased composition (low complexity); the sequence is QALYEQQQLEAASAAEE.

Belongs to the krueppel C2H2-type zinc-finger protein family.

Its subcellular location is the nucleus. Its function is as follows. May be involved in transcriptional regulation. This is Zinc finger protein 76 (Znf76) from Mus musculus (Mouse).